The primary structure comprises 591 residues: Transcription factor COE1-A (591 aa).

An interaction with DNA region spans residues 63–66 (RKSN). The C5-type zinc finger occupies 151 to 170 (CRVLLTHEIMCSRCCDKKSC). 2 interaction with DNA regions span residues 197–204 (NCLKNAGN) and 236–239 (NNSK). Residues 262 to 344 (PCIKAISPSE…CKGTPGRFIY (83 aa)) form the IPT/TIG domain. Positions 454-466 (ANQGFSRNTSSVS) are enriched in polar residues. Positions 454-484 (ANQGFSRNTSSVSPHGYVPSTTPQQSSYSTV) are disordered. The span at 471–484 (VPSTTPQQSSYSTV) shows a compositional bias: low complexity.

Belongs to the COE family. As to quaternary structure, forms either a homodimer or a heterodimer with a related family member. As to expression, detected in B cells.

The protein resides in the nucleus. Transcriptional activator. This is Transcription factor COE1-A from Danio rerio (Zebrafish).